Here is a 317-residue protein sequence, read N- to C-terminus: Olfactory receptor-like protein OLF3 (317 aa).

The Extracellular portion of the chain corresponds to Met-1 to Val-25. Asn-5 is a glycosylation site (N-linked (GlcNAc...) asparagine). The helical transmembrane segment at Ser-26 to Ile-49 threads the bilayer. Residues Arg-50–Thr-57 are Cytoplasmic-facing. The chain crosses the membrane as a helical span at residues Pro-58 to Pro-79. The Extracellular segment spans residues Gln-80–Gln-100. A helical transmembrane segment spans residues Leu-101–Tyr-120. At Asp-121–Gly-139 the chain is on the cytoplasmic side. A helical membrane pass occupies residues Leu-140 to Met-158. The Extracellular segment spans residues Gln-159–Glu-196. A helical transmembrane segment spans residues Ile-197–Ile-219. The Cytoplasmic portion of the chain corresponds to Gln-220 to Lys-236. The chain crosses the membrane as a helical span at residues Ala-237–Ile-260. The Extracellular portion of the chain corresponds to Gln-261–Lys-272. Residues Leu-273–Val-292 traverse the membrane as a helical segment. The Cytoplasmic segment spans residues Arg-293–Thr-317.

Belongs to the G-protein coupled receptor 1 family.

The protein resides in the cell membrane. Putative odorant or sperm cell receptor. The protein is Olfactory receptor-like protein OLF3 of Canis lupus familiaris (Dog).